The primary structure comprises 206 residues: Small ribosomal subunit protein uS4 (206 aa).

One can recognise an S4 RNA-binding domain in the interval 96 to 156 (CRLDNVVYRM…EKSKNQLRIA (61 aa)).

The protein belongs to the universal ribosomal protein uS4 family. Part of the 30S ribosomal subunit. Contacts protein S5. The interaction surface between S4 and S5 is involved in control of translational fidelity.

Its function is as follows. One of the primary rRNA binding proteins, it binds directly to 16S rRNA where it nucleates assembly of the body of the 30S subunit. Functionally, with S5 and S12 plays an important role in translational accuracy. This chain is Small ribosomal subunit protein uS4, found in Pseudomonas aeruginosa (strain LESB58).